We begin with the raw amino-acid sequence, 375 residues long: Peritrophin-48 (375 aa).

A signal peptide spans Met-1–Ala-20. Chitin-binding type-2 domains follow at residues Ala-25–Leu-83, Asp-86–Asp-143, Leu-153–Arg-210, Glu-224–Arg-292, and Glu-294–Asn-360. Residues Cys-60 and Cys-73 are joined by a disulfide bond. The N-linked (GlcNAc...) asparagine glycan is linked to Asn-117. Cystine bridges form between Cys-120-Cys-133, Cys-187-Cys-200, Cys-265-Cys-278, and Cys-330-Cys-343. The N-linked (GlcNAc...) asparagine glycan is linked to Asn-360.

In terms of processing, glycosylated. Cardia and midgut peritrophic membrane.

In terms of biological role, may bind chitin or related oligosaccharide structures. The chain is Peritrophin-48 from Lucilia cuprina (Green bottle fly).